Reading from the N-terminus, the 425-residue chain is Phosphoribosylamine--glycine ligase (425 aa).

Positions 109–315 constitute an ATP-grasp domain; the sequence is KALMQEAGIP…LEELILACVQ (207 aa). 135 to 195 contacts ATP; sequence IQAQGAPIVV…EECLTGQEVS (61 aa). Glu-285 and Asn-287 together coordinate Mg(2+).

The protein belongs to the GARS family. Mg(2+) is required as a cofactor. Mn(2+) serves as cofactor.

The catalysed reaction is 5-phospho-beta-D-ribosylamine + glycine + ATP = N(1)-(5-phospho-beta-D-ribosyl)glycinamide + ADP + phosphate + H(+). It participates in purine metabolism; IMP biosynthesis via de novo pathway; N(1)-(5-phospho-D-ribosyl)glycinamide from 5-phospho-alpha-D-ribose 1-diphosphate: step 2/2. The chain is Phosphoribosylamine--glycine ligase from Nostoc sp. (strain PCC 7120 / SAG 25.82 / UTEX 2576).